A 232-amino-acid polypeptide reads, in one-letter code: Vesicle transport through interaction with t-SNAREs homolog 1B (232 aa).

An N-acetylalanine modification is found at Ala-2. Interaction with CLINT1 stretches follow at residues 2–23 (ATSA…GLLE) and 69–73 (APLTF). Residues 2 to 208 (ATSAASSEHF…SRKVITNKLL (207 aa)) are Cytoplasmic-facing. Positions 36 to 98 (AGTEEKKKLV…AKLHREVRST (63 aa)) form a coiled coil. Thr-103 carries the post-translational modification Phosphothreonine. Arg-107 bears the Omega-N-methylarginine mark. Position 138 is a phosphoserine (Ser-138). Residues 160-201 (GSEIIEELGEQRDQLERTKSRLVNTNENLSKSRKILRSMSRK) are a coiled coil. A helical; Anchor for type IV membrane protein transmembrane segment spans residues 209–229 (LSVIIVLELAILVGLVYYKFF). The Vesicular segment spans residues 230 to 232 (RHH).

This sequence belongs to the VTI1 family. Forms a SNARE complex with STX7, STX8 and VAMP8 which functions in the homotypic fusion of late endosomes. Component of the SNARE complex composed of STX7, STX8, VAMP7 and VIT1B that is required for heterotypic fusion of late endosomes with lysosomes. May interact with STX17. Interacts with CLINT1.

Its subcellular location is the early endosome membrane. It is found in the late endosome membrane. The protein localises to the lysosome membrane. The protein resides in the cytoplasmic granule. It localises to the recycling endosome membrane. V-SNARE that mediates vesicle transport pathways through interactions with t-SNAREs on the target membrane. These interactions are proposed to mediate aspects of the specificity of vesicle trafficking and to promote fusion of the lipid bilayers. The protein is Vesicle transport through interaction with t-SNAREs homolog 1B (Vti1b) of Rattus norvegicus (Rat).